The sequence spans 962 residues: Putative primase C962R (962 aa).

Residues 607–775 (ELDARLWIMF…PDPNNSYEKK (169 aa)) enclose the SF3 helicase domain. 636–643 (GGGCNGKT) is an ATP binding site.

It belongs to the asfivirus helicase C962R family.

This is Putative primase C962R from African swine fever virus (isolate Warthog/Namibia/Wart80/1980) (ASFV).